The primary structure comprises 368 residues: Alanine racemase 3 (368 aa).

Residue Lys-42 is the Proton acceptor; specific for D-alanine of the active site. Lys-42 carries the post-translational modification N6-(pyridoxal phosphate)lysine. Arg-141 provides a ligand contact to substrate. The Proton acceptor; specific for L-alanine role is filled by Tyr-262. Met-310 serves as a coordination point for substrate.

This sequence belongs to the alanine racemase family. It depends on pyridoxal 5'-phosphate as a cofactor.

The enzyme catalyses L-alanine = D-alanine. Its pathway is amino-acid biosynthesis; D-alanine biosynthesis; D-alanine from L-alanine: step 1/1. In terms of biological role, catalyzes the interconversion of L-alanine and D-alanine. May also act on other amino acids. The protein is Alanine racemase 3 (alr3) of Salmonella typhi.